Here is a 280-residue protein sequence, read N- to C-terminus: L-proline cis-4-hydroxylase (280 aa).

3 residues coordinate Fe cation: H106, D108, and H154. R164 lines the 2-oxoglutarate pocket.

Belongs to the L-proline cis-4-/cis-3-hydroxylase family. The cofactor is Fe(2+).

The catalysed reaction is L-proline + 2-oxoglutarate + O2 = cis-4-hydroxy-L-proline + succinate + CO2. With respect to regulation, inhibited by metal ions such as Co(2+), Zn(2+), Cu(2+) or Ni(2+). Is also inhibited by EDTA or diethylpyrocarbonate (DEPC) in vitro. Unlike the procollagen-proline cis-3- and trans-4-hydroxylases from mammals, does not necessarily require L-ascorbate for activity although it does increase the activity of the enzyme. Dioxygenase that catalyzes the 2-oxoglutarate-dependent selective hydroxylation of free L-proline to cis-4-hydroxy-L-proline (cis-4-Hyp). The protein is L-proline cis-4-hydroxylase of Rhizobium meliloti (strain 1021) (Ensifer meliloti).